The following is a 304-amino-acid chain: Killer cell immunoglobulin-like receptor 2DS5 (304 aa).

The first 21 residues, 1–21 (MSLMVISMACVAFFLLQGAWP), serve as a signal peptide directing secretion. Over 22 to 245 (HEGFRRKPSL…SETGNPRHLH (224 aa)) the chain is Extracellular. Ig-like C2-type domains follow at residues 42–107 (EETV…VTHS) and 142–205 (GESV…FRDS). 2 disulfides stabilise this stretch: C49-C100 and C149-C198. 4 N-linked (GlcNAc...) asparagine glycosylation sites follow: N67, N84, N178, and N223. Residues 246–264 (VLIGTSVVKLPFTILLFFL) form a helical membrane-spanning segment. At 265–304 (LHRWCSNKKNASVMDQGPAGNRTVNREDSDEQDHQEVSYA) the chain is on the cytoplasmic side. The segment at 275–304 (ASVMDQGPAGNRTVNREDSDEQDHQEVSYA) is disordered. Over residues 288–304 (VNREDSDEQDHQEVSYA) the composition is skewed to basic and acidic residues.

This sequence belongs to the immunoglobulin superfamily. In terms of assembly, interacts with TYROBP. In terms of processing, N-glycosylated, glycosylation varies depending on the allele which alters cell surface expression levels. Expressed on a discrete subset of peripheral blood NK cells.

The protein localises to the cell membrane. In terms of biological role, activating natural killer (NK) receptor that recognizes C2 epitopes of HLA-C alleles. Bridging the innate and adaptive immune systems, NK cells express a number of cell surface receptors which either inhibit or stimulate their cytotoxicity. Able to activate NK cells citotoxicity and cytokine production such as IFNG. Receptor functions are attenuated even lost in some alleles, such as KIR2DS5*002 represented in this entry. This chain is Killer cell immunoglobulin-like receptor 2DS5, found in Homo sapiens (Human).